Consider the following 303-residue polypeptide: CDAN1-interacting nuclease 1 (303 aa).

It localises to the nucleus. It is found in the cytoplasm. May play a role in erythroid cell differentiation. The chain is CDAN1-interacting nuclease 1 from Xenopus laevis (African clawed frog).